An 815-amino-acid polypeptide reads, in one-letter code: Dual specificity tyrosine-phosphorylation-regulated kinase mbk-2 (815 aa).

Disordered regions lie at residues 1 to 49 (MAAL…NYTR), 67 to 146 (PSSF…PLGT), 185 to 204 (YEFPSGQAQQQRRLGGSQQH), and 298 to 395 (ALPS…FRPE). 2 stretches are compositionally biased toward polar residues: residues 7 to 25 (FTRNSRSYGQQPIDVTQQG) and 40 to 49 (SKMSNINYTR). Residues 68–78 (SSFSGASSSSS) are compositionally biased toward low complexity. 2 stretches are compositionally biased toward polar residues: residues 119–140 (SGNTLTRSYHQPSSTNSSTSNL) and 190–204 (GQAQQQRRLGGSQQH). A compositionally biased stretch (low complexity) spans 301 to 316 (SVGTSSSNGSSNSSSG). Positions 325-351 (LMTQSIGGPNKHLSASHSTLNTASTHD) are enriched in polar residues. Serine 361 carries the phosphoserine; by cdk-1 modification. The segment covering 363–391 (SNESLSRSHTSSSGGSQGGHNSNSGSNSG) has biased composition (low complexity). Residues 460-773 (YEVLKVIGKG…PAQALKHKWL (314 aa)) form the Protein kinase domain. Residues 466-474 (IGKGSFGQV) and lysine 489 each bind ATP. Aspartate 586 acts as the Proton acceptor in catalysis. The residue at position 620 (tyrosine 620) is a Phosphotyrosine; by autocatalysis.

Belongs to the protein kinase superfamily. CMGC Ser/Thr protein kinase family. MNB/DYRK subfamily. As to quaternary structure, part of a complex, consisting of pseudophosphatases egg-3, egg-4, egg-5 and kinase mbk-2. Interacts (via Tyr-618 and Tyr-620) with egg-4 (via tyrosine-protein phosphatase domain) and egg-5 (via tyrosine-protein phosphatase domain); mbk-2 tyrosine phosphorylation enhances the interaction. The interaction inhibits mbk-2 kinase activity and is required for mbk-2 oocyte cortex localization. Interacts (via N-terminus) with egg-3 (via tyrosine-protein phosphatase domain); the interaction does not affect mbk-2 kinase activity, is enhanced by mbk-2 tyrosine phosphorylation status and requires prior binding of mbk-2 to egg-4 and egg-5. It depends on Mg(2+) as a cofactor. Post-translationally, autophosphorylated.

It localises to the cytoplasm. It is found in the cell cortex. The enzyme catalyses L-seryl-[protein] + ATP = O-phospho-L-seryl-[protein] + ADP + H(+). It carries out the reaction L-threonyl-[protein] + ATP = O-phospho-L-threonyl-[protein] + ADP + H(+). It catalyses the reaction L-tyrosyl-[protein] + ATP = O-phospho-L-tyrosyl-[protein] + ADP + H(+). Activated during oocyte maturation by phosphorylation on Ser-361 by cdk-1. The pseudotyrosine phosphatases egg-4 and egg-5 sequester activated mbk-2 until the meiotic divisions and inhibit mbk-2 kinase activity directly, using a mixed-inhibition mechanism that does not involve tyrosine dephosphorylation. Its function is as follows. Required for oocyte-to-zygote transition in which it phosphorylates oocyte proteins, including mei-1, oma-1, oma-2, mex-5, and mex-6, modifying their activity and/or stability following meiosis. Through phosphorylation of P granule components including meg-1, promotes the disassembly of zygotic P granules in the anterior cytoplasm during zygote polarization, and thus plays a role in P granule distribution and segregation in early stage embryos following meiosis. Functions in both spindle positioning and in the posterior localization of cytoplasmic determinants, including pie-1, pos-1, and pgl-1, in early embryos. Involved in the asymmetric distribution of plk-1 at the 2-cell embryonic stage. The sequence is that of Dual specificity tyrosine-phosphorylation-regulated kinase mbk-2 from Caenorhabditis briggsae.